Consider the following 726-residue polypeptide: Catalase-peroxidase (726 aa).

The span at 1 to 13 (MSMSEETNNSLSS) shows a compositional bias: polar residues. Positions 1–34 (MSMSEETNNSLSSGKCPFHHGGSDQSAGEGTGSR) are disordered. Residues 105 to 226 (WHGAGTYRSV…LAATEMGLIY (122 aa)) constitute a cross-link (tryptophyl-tyrosyl-methioninium (Trp-Tyr) (with M-252)). Catalysis depends on H106, which acts as the Proton acceptor. The tryptophyl-tyrosyl-methioninium (Tyr-Met) (with W-105) cross-link spans 226-252 (YVNPEGPNASGEPLSAAAAIRATFGNM). H267 serves as a coordination point for heme b.

This sequence belongs to the peroxidase family. Peroxidase/catalase subfamily. In terms of assembly, homodimer or homotetramer. Heme b serves as cofactor. In terms of processing, formation of the three residue Trp-Tyr-Met cross-link is important for the catalase, but not the peroxidase activity of the enzyme.

The enzyme catalyses H2O2 + AH2 = A + 2 H2O. The catalysed reaction is 2 H2O2 = O2 + 2 H2O. Its function is as follows. Bifunctional enzyme with both catalase and broad-spectrum peroxidase activity. In Enterobacter sp. (strain 638), this protein is Catalase-peroxidase.